We begin with the raw amino-acid sequence, 428 residues long: Histidine--tRNA ligase (428 aa).

Belongs to the class-II aminoacyl-tRNA synthetase family. Homodimer.

It localises to the cytoplasm. It carries out the reaction tRNA(His) + L-histidine + ATP = L-histidyl-tRNA(His) + AMP + diphosphate + H(+). The protein is Histidine--tRNA ligase of Mesomycoplasma hyopneumoniae (strain 7448) (Mycoplasma hyopneumoniae).